A 266-amino-acid chain; its full sequence is Large ribosomal subunit protein uL4 (266 aa).

The protein belongs to the universal ribosomal protein uL4 family. In terms of assembly, part of the 50S ribosomal subunit.

Its function is as follows. One of the primary rRNA binding proteins, this protein initially binds near the 5'-end of the 23S rRNA. It is important during the early stages of 50S assembly. It makes multiple contacts with different domains of the 23S rRNA in the assembled 50S subunit and ribosome. Functionally, forms part of the polypeptide exit tunnel. The chain is Large ribosomal subunit protein uL4 from Sulfolobus acidocaldarius (strain ATCC 33909 / DSM 639 / JCM 8929 / NBRC 15157 / NCIMB 11770).